The sequence spans 76 residues: Serine proteinase inhibitor IA-2 (76 aa).

Serine 1 bears the N-acetylserine mark.

This sequence belongs to the protease inhibitor I9 family.

Specifically inhibits an intracellular serine proteinase (proteinase A). This is Serine proteinase inhibitor IA-2 from Pleurotus ostreatus (Oyster mushroom).